Here is a 114-residue protein sequence, read N- to C-terminus: MICOS complex subunit MIC12 (114 aa).

Residues 4-26 (IAKLGSFTLVSGVVATSCYYYFI) form a helical membrane-spanning segment.

The protein belongs to the MICOS complex subunit Mic12 family. Component of the mitochondrial contact site and cristae organizing system (MICOS) complex.

It localises to the mitochondrion inner membrane. Functionally, component of the MICOS complex, a large protein complex of the mitochondrial inner membrane that plays crucial roles in the maintenance of crista junctions, inner membrane architecture, and formation of contact sites to the outer membrane. This Candida glabrata (strain ATCC 2001 / BCRC 20586 / JCM 3761 / NBRC 0622 / NRRL Y-65 / CBS 138) (Yeast) protein is MICOS complex subunit MIC12 (AIM5).